The primary structure comprises 198 residues: Peroxiredoxin-2F, mitochondrial (198 aa).

The transit peptide at 1–27 (MASALLRKATVGGSAAAAAARWASRGL) directs the protein to the mitochondrion. Positions 34–198 (SDIVSAAPGV…SGAEVILDQI (165 aa)) constitute a Thioredoxin domain. C86 (cysteine sulfenic acid (-SOH) intermediate) is an active-site residue.

The protein belongs to the peroxiredoxin family. Prx5 subfamily. In terms of assembly, monomer.

The protein resides in the mitochondrion matrix. It carries out the reaction [glutaredoxin]-dithiol + a hydroperoxide = [glutaredoxin]-disulfide + an alcohol + H2O. Functionally, thiol-specific peroxidase that catalyzes the reduction of hydrogen peroxide and organic hydroperoxides to water and alcohols, respectively. Plays a role in cell protection against oxidative stress by detoxifying peroxides. Reduces preferentially hydrogen peroxide rather than alkyl peroxides. May be involved in mitochondrial redox homeostasis. This is Peroxiredoxin-2F, mitochondrial (PRXIIF) from Oryza sativa subsp. japonica (Rice).